We begin with the raw amino-acid sequence, 338 residues long: MIKTDALIIGAGPTGLFCAHQLGLIGLNCEIVDNLDKIGGQCIELYPDKPIYDIPAVPECTGEELTNNLIKQIKPFNIKFHLNERVEEVNKVNNKWIVKTNKKKEFVTPNIIIAGGVGSFEPRKFSPKECEKYENRSLFYSIKDKTIFQDKTISIFGGGDSALDWAIELSKSSYVNLIHRRDEFTGAQLSIDKIKELEKSGKLKIYTKYQLNSVKGEQNIKSIEIKHDDESLKELETNYVLGFFGLIMKLGPIVDWGLNLDKKTIPVNTENFETNLNGIFAIGDICTYPGKLKLILSGFHEGALAARGCFKYARPDEKLRFEFTTTSKAAQERLGVKK.

8 residues coordinate FAD: Thr-14, Asp-33, Gln-41, Tyr-46, Val-86, Phe-120, Asp-284, and Thr-325.

Belongs to the ferredoxin--NADP reductase type 2 family. As to quaternary structure, homodimer. FAD serves as cofactor.

It carries out the reaction 2 reduced [2Fe-2S]-[ferredoxin] + NADP(+) + H(+) = 2 oxidized [2Fe-2S]-[ferredoxin] + NADPH. This Pelagibacter ubique (strain HTCC1062) protein is Ferredoxin--NADP reductase.